Reading from the N-terminus, the 484-residue chain is D-aminoacylase (484 aa).

Belongs to the metallo-dependent hydrolases superfamily. N-acyl-D-amino-acid deacylase family. The cofactor is Zn(2+).

It localises to the cytoplasm. It catalyses the reaction an N-acyl-D-amino acid + H2O = a D-alpha-amino acid + a carboxylate. In terms of biological role, has a wide specificity; hydrolyzes N-acyl derivative of neutral D-amino acids. This is D-aminoacylase (dan) from Alcaligenes xylosoxydans xylosoxydans (Achromobacter xylosoxidans).